We begin with the raw amino-acid sequence, 68 residues long: Protein transport protein Sec61 subunit gamma (68 aa).

At 1–32 (MDQVMQFVEPSRQFVKDSIRLVKRCTKPDRKE) the chain is on the cytoplasmic side. A helical membrane pass occupies residues 33-61 (FQKIAMATAIGFAIMGFIGFFVKLIHIPI). Topologically, residues 62-68 (NNIIVGS) are extracellular.

It belongs to the SecE/SEC61-gamma family. In terms of assembly, the SEC61 channel-forming translocon complex consists of channel-forming core components SEC61A1, SEC61B and SEC61G and different auxiliary components such as SEC62 and SEC63. The SEC61 channel associates with the multi-pass translocon (MPT) complex.

It is found in the endoplasmic reticulum membrane. Functionally, component of SEC61 channel-forming translocon complex that mediates transport of signal peptide-containing precursor polypeptides across the endoplasmic reticulum (ER). Forms a ribosome receptor and a gated pore in the ER membrane, both functions required for cotranslational translocation of nascent polypeptides. The SEC61 channel is also involved in ER membrane insertion of transmembrane proteins: it mediates membrane insertion of the first few transmembrane segments of proteins, while insertion of subsequent transmembrane regions of multi-pass membrane proteins is mediated by the multi-pass translocon (MPT) complex. This chain is Protein transport protein Sec61 subunit gamma (sec61g), found in Xenopus laevis (African clawed frog).